The sequence spans 371 residues: Anhydro-N-acetylmuramic acid kinase (371 aa).

Gly12 to Asp19 is a binding site for ATP.

Belongs to the anhydro-N-acetylmuramic acid kinase family.

The enzyme catalyses 1,6-anhydro-N-acetyl-beta-muramate + ATP + H2O = N-acetyl-D-muramate 6-phosphate + ADP + H(+). The protein operates within amino-sugar metabolism; 1,6-anhydro-N-acetylmuramate degradation. Its pathway is cell wall biogenesis; peptidoglycan recycling. Catalyzes the specific phosphorylation of 1,6-anhydro-N-acetylmuramic acid (anhMurNAc) with the simultaneous cleavage of the 1,6-anhydro ring, generating MurNAc-6-P. Is required for the utilization of anhMurNAc either imported from the medium or derived from its own cell wall murein, and thus plays a role in cell wall recycling. The polypeptide is Anhydro-N-acetylmuramic acid kinase (Saccharophagus degradans (strain 2-40 / ATCC 43961 / DSM 17024)).